Consider the following 346-residue polypeptide: NADH-ubiquinone oxidoreductase chain 2 (346 aa).

A run of 11 helical transmembrane segments spans residues 3–23 (PLIL…VMAS), 25–45 (HWLM…PILM), 59–79 (YFLT…INLM), 96–116 (IIMT…FWVP), 122–142 (ISLT…MSIL), 149–169 (INLN…GWGG), 178–198 (IMAY…VYNP), 200–220 (LTML…MLFI), 237–257 (APLI…LPPL), 274–294 (SSII…YFYM), and 322–342 (ITLL…TPML).

This sequence belongs to the complex I subunit 2 family. As to quaternary structure, core subunit of respiratory chain NADH dehydrogenase (Complex I) which is composed of 45 different subunits. Interacts with TMEM242.

It localises to the mitochondrion inner membrane. It carries out the reaction a ubiquinone + NADH + 5 H(+)(in) = a ubiquinol + NAD(+) + 4 H(+)(out). Its function is as follows. Core subunit of the mitochondrial membrane respiratory chain NADH dehydrogenase (Complex I) which catalyzes electron transfer from NADH through the respiratory chain, using ubiquinone as an electron acceptor. Essential for the catalytic activity and assembly of complex I. In Equus asinus (Donkey), this protein is NADH-ubiquinone oxidoreductase chain 2.